The following is a 120-amino-acid chain: Glycine cleavage system H protein (120 aa).

The region spanning 17 to 99 is the Lipoyl-binding domain; the sequence is VATVGITEHA…QGAAWFFKLK (83 aa). K58 is subject to N6-lipoyllysine.

The protein belongs to the GcvH family. In terms of assembly, the glycine cleavage system is composed of four proteins: P, T, L and H. (R)-lipoate is required as a cofactor.

Functionally, the glycine cleavage system catalyzes the degradation of glycine. The H protein shuttles the methylamine group of glycine from the P protein to the T protein. The chain is Glycine cleavage system H protein from Sinorhizobium fredii (strain NBRC 101917 / NGR234).